Here is a 101-residue protein sequence, read N- to C-terminus: Large ribosomal subunit protein bL28 (101 aa).

It belongs to the bacterial ribosomal protein bL28 family.

In Methylorubrum populi (strain ATCC BAA-705 / NCIMB 13946 / BJ001) (Methylobacterium populi), this protein is Large ribosomal subunit protein bL28.